The primary structure comprises 148 residues: Sec-independent protein translocase protein TatB (148 aa).

A helical transmembrane segment spans residues 1 to 21 (MFGISFSELLLVGLVALLVLG). The interval 85 to 148 (EPTPVEHVGE…NDTTQPPRAP (64 aa)) is disordered. Low complexity predominate over residues 107–148 (APAVAPTESAPVVAPASVEHVAQTAAPTTPAPNDTTQPPRAP).

It belongs to the TatB family. In terms of assembly, the Tat system comprises two distinct complexes: a TatABC complex, containing multiple copies of TatA, TatB and TatC subunits, and a separate TatA complex, containing only TatA subunits. Substrates initially bind to the TatABC complex, which probably triggers association of the separate TatA complex to form the active translocon.

Its subcellular location is the cell inner membrane. Functionally, part of the twin-arginine translocation (Tat) system that transports large folded proteins containing a characteristic twin-arginine motif in their signal peptide across membranes. Together with TatC, TatB is part of a receptor directly interacting with Tat signal peptides. TatB may form an oligomeric binding site that transiently accommodates folded Tat precursor proteins before their translocation. This is Sec-independent protein translocase protein TatB from Pseudomonas fluorescens (strain Pf0-1).